A 105-amino-acid polypeptide reads, in one-letter code: Large ribosomal subunit protein uL23 (105 aa).

The protein belongs to the universal ribosomal protein uL23 family. In terms of assembly, part of the 50S ribosomal subunit. Contacts protein L29, and trigger factor when it is bound to the ribosome.

Its function is as follows. One of the early assembly proteins it binds 23S rRNA. One of the proteins that surrounds the polypeptide exit tunnel on the outside of the ribosome. Forms the main docking site for trigger factor binding to the ribosome. The chain is Large ribosomal subunit protein uL23 from Janthinobacterium sp. (strain Marseille) (Minibacterium massiliensis).